We begin with the raw amino-acid sequence, 89 residues long: Small ribosomal subunit protein uS15 (89 aa).

Belongs to the universal ribosomal protein uS15 family. In terms of assembly, part of the 30S ribosomal subunit. Forms a bridge to the 50S subunit in the 70S ribosome, contacting the 23S rRNA.

In terms of biological role, one of the primary rRNA binding proteins, it binds directly to 16S rRNA where it helps nucleate assembly of the platform of the 30S subunit by binding and bridging several RNA helices of the 16S rRNA. Forms an intersubunit bridge (bridge B4) with the 23S rRNA of the 50S subunit in the ribosome. The polypeptide is Small ribosomal subunit protein uS15 (Bradyrhizobium sp. (strain ORS 278)).